We begin with the raw amino-acid sequence, 185 residues long: Ribosome-recycling factor (185 aa).

The protein belongs to the RRF family.

The protein localises to the cytoplasm. In terms of biological role, responsible for the release of ribosomes from messenger RNA at the termination of protein biosynthesis. May increase the efficiency of translation by recycling ribosomes from one round of translation to another. In Corynebacterium jeikeium (strain K411), this protein is Ribosome-recycling factor.